We begin with the raw amino-acid sequence, 425 residues long: Histidine--tRNA ligase (425 aa).

This sequence belongs to the class-II aminoacyl-tRNA synthetase family. Homodimer.

The protein resides in the cytoplasm. The enzyme catalyses tRNA(His) + L-histidine + ATP = L-histidyl-tRNA(His) + AMP + diphosphate + H(+). The protein is Histidine--tRNA ligase of Erwinia tasmaniensis (strain DSM 17950 / CFBP 7177 / CIP 109463 / NCPPB 4357 / Et1/99).